Here is a 442-residue protein sequence, read N- to C-terminus: D-galactonate dehydratase family member SSLG_02014 (442 aa).

Position 161 (His161) interacts with substrate. Catalysis depends on Tyr197, which acts as the Proton donor/acceptor. Asp246 serves as a coordination point for Mg(2+). Residue His248 is the Proton donor/acceptor of the active site. Residues Glu272 and Glu298 each coordinate Mg(2+). Residues Glu298, Arg319, His348, Asp352, and Glu375 each coordinate substrate.

This sequence belongs to the mandelate racemase/muconate lactonizing enzyme family. GalD subfamily. Requires Mg(2+) as cofactor.

The enzyme catalyses D-mannonate = 2-dehydro-3-deoxy-D-gluconate + H2O. Its function is as follows. Has low D-mannonate dehydratase activity (in vitro), suggesting that this is not a physiological substrate and that it has no significant role in D-mannonate degradation in vivo. Has no detectable activity with a panel of 70 other acid sugars (in vitro). This chain is D-galactonate dehydratase family member SSLG_02014, found in Streptomyces sp. (strain SPB78).